Consider the following 408-residue polypeptide: Putative ankyrin repeat protein L483 (408 aa).

ANK repeat units follow at residues 78–107 (SLNK…DIKA), 108–137 (GDDC…NIRA), 139–167 (NDYA…DIRA), 168–197 (NNDY…NIRT), 198–227 (ENDY…DIRA), 229–257 (NDYA…NIRV), 259–287 (NDYA…NIRA), 288–317 (RCDF…DIRS), 318–347 (QNDY…DIRT), 349–377 (DDYA…NIRA), and 378–407 (KDDY…VLTK).

The protein is Putative ankyrin repeat protein L483 of Acanthamoeba polyphaga (Amoeba).